Here is a 1116-residue protein sequence, read N- to C-terminus: Protein STICHEL-like 1 (1116 aa).

Disordered regions lie at residues 95–138 (RTSS…LEET) and 225–244 (KFLR…NSTP). Acidic residues predominate over residues 115–124 (NDDDDDDDDV). 2 consecutive short sequence motifs (PEST) follow at residues 257–282 (RNPS…FKGR) and 402–422 (KSQD…ESIQ). ATP is bound at residue 463–470 (GPRGTGKT). The Zn(2+) site is built by C482, C492, C495, and C498. Positions 726-760 (EAFLDRRNLTEADLERLKHALKLLSEAEKQLRVST) form a coiled coil. The segment at 777 to 798 (PSPGTTHTGSSRRQSSRATEES) is disordered. The span at 778–793 (SPGTTHTGSSRRQSSR) shows a compositional bias: polar residues.

Belongs to the DnaX/STICHEL family.

The sequence is that of Protein STICHEL-like 1 from Arabidopsis thaliana (Mouse-ear cress).